Here is a 169-residue protein sequence, read N- to C-terminus: Glycine-rich RNA-binding protein 10 (169 aa).

The RRM domain occupies 6–84 (YRCFVGGLAW…RTITVNEAQS (79 aa)). Disordered regions lie at residues 80-101 (NEAQ…YGGR) and 121-169 (GYGS…GGGW). Positions 85-101 (RGGGGGGGRGGGGYGGR) are enriched in gly residues.

Expressed only in roots and stems.

Possibly has a role in RNA transcription or processing during stress. The sequence is that of Glycine-rich RNA-binding protein 10 (GRP10) from Brassica napus (Rape).